We begin with the raw amino-acid sequence, 265 residues long: Undecaprenyl-diphosphatase (265 aa).

The next 8 helical transmembrane spans lie at 15 to 37 (GLTEFLPVSSTGHLIITGYLLEY), 41 to 61 (KAESFQVAIQLGAILAVVFLY), 85 to 105 (YLLALTSAPASVLGLLTHSFI), 109 to 129 (LFGPVTVAWALAAGALYILAV), 144 to 164 (VSPALALGIGMFQCLALWPGF), 183 to 203 (LAAEYSFVAAVPIMFAATGYD), 218 to 238 (FWAVGLLVSFASAWAAVKGFI), and 244 to 264 (VTFRPFAWYRLALAPVVLLFW).

Belongs to the UppP family.

It is found in the cell inner membrane. It carries out the reaction di-trans,octa-cis-undecaprenyl diphosphate + H2O = di-trans,octa-cis-undecaprenyl phosphate + phosphate + H(+). In terms of biological role, catalyzes the dephosphorylation of undecaprenyl diphosphate (UPP). Confers resistance to bacitracin. The chain is Undecaprenyl-diphosphatase from Oleidesulfovibrio alaskensis (strain ATCC BAA-1058 / DSM 17464 / G20) (Desulfovibrio alaskensis).